A 72-amino-acid polypeptide reads, in one-letter code: SRY-related protein AES1 (72 aa).

Positions 1–69 form a DNA-binding region, HMG box; it reads VKRPMNAFMV…KHMADYPDYK (69 aa).

The protein resides in the nucleus. The polypeptide is SRY-related protein AES1 (Alligator mississippiensis (American alligator)).